Reading from the N-terminus, the 430-residue chain is DD-carboxypeptidase/endopeptidase Mpg (430 aa).

Zn(2+) is bound by residues histidine 295, aspartate 299, and histidine 375.

The protein belongs to the peptidase M23B family. In terms of assembly, monomer. Zn(2+) is required as a cofactor. Post-translationally, likely to be synthesized as a proenzyme. The cleavage of the N-terminal domain is probably required for the activation of the enzyme.

It is found in the cell outer membrane. Has both endopeptidase and DD-carboxypeptidase activities. Degrades cell wall peptidoglycan (PG) to allow consummate expression of pili. This chain is DD-carboxypeptidase/endopeptidase Mpg, found in Neisseria meningitidis serogroup B (strain ATCC 13091 / M2091).